The chain runs to 261 residues: MVSWIISRAVVLVFGLLYPAYASYKAVKTKNVREYVRWMMYWIVFALFMTVETFTDIFIAWFPFYYEIKMAFVVWLLSPYTRGASLLYRKCIHPTLSLKEKEIDSYIIQAKERSYESFVNIGRKGLNIAASAAVQAATKGQGALVGRLRSFSMQDLRALPDDTPIHYRDALYPDAPELHRRPIGYPTTSHADSDSMDERWSDSEMAETRTAARTRGGMPSKPLQRSQSLRVSKKKGLSREVSTKTTKPKGKKKPAQSEPEN.

2 helical membrane-spanning segments follow: residues 1-21 and 35-55; these read MVSWIISRAVVLVFGLLYPAY and YVRWMMYWIVFALFMTVETFT. A disordered region spans residues 177–261; sequence ELHRRPIGYP…KKPAQSEPEN (85 aa). Residues 191–202 show a composition bias toward basic and acidic residues; it reads ADSDSMDERWSD.

The protein belongs to the DP1 family. Interacts with microtubules. In terms of tissue distribution, during gastrulation, expressed on the dorsal side of the embryo and then in the neural plate and neural tube. At tailbud stages, expressed in the somites. Expressed in the neural tube later in development.

It localises to the endoplasmic reticulum membrane. In terms of biological role, microtubule-binding protein required to ensure proper cell division and nuclear envelope reassembly by sequestering the endoplasmic reticulum away from chromosomes during mitosis. Probably acts by clearing the endoplasmic reticulum membrane from metaphase chromosomes. May play a role in the maintenance of both the nervous system and the musculature. The protein is Receptor expression-enhancing protein 4 (reep4) of Xenopus tropicalis (Western clawed frog).